We begin with the raw amino-acid sequence, 504 residues long: Protein phosphatase 1J (504 aa).

2 disordered regions span residues 1-102 (MLNR…RLPW) and 194-217 (PLCL…SPQS). Over residues 14-23 (SSSGTSSQRS) the composition is skewed to low complexity. Threonine 41 bears the Phosphothreonine mark. Over residues 59–73 (TAETPVSFSRPTFLQ) the composition is skewed to polar residues. Residues serine 65 and serine 75 each carry the phosphoserine modification. The PPM-type phosphatase domain occupies 103 to 496 (STGYAEVINA…DDISVFVIPL (394 aa)). Positions 197–217 (LPSTPGTPGVSSPSQLVSPQS) are enriched in low complexity.

This sequence belongs to the PP2C family. Interacts with UBE2I/UBC9.

The catalysed reaction is O-phospho-L-seryl-[protein] + H2O = L-seryl-[protein] + phosphate. It catalyses the reaction O-phospho-L-threonyl-[protein] + H2O = L-threonyl-[protein] + phosphate. This chain is Protein phosphatase 1J (Ppm1j), found in Rattus norvegicus (Rat).